A 557-amino-acid polypeptide reads, in one-letter code: MDGIVPDIAVGTKRGSDELFSACVTNGPFIMSGTSASTANGNDSKKFKGDSRSAGVPSRVIHIRKLPGDVTEGEVISLGLPFGKVTNLLMLKGKNQAFIEMHTEEAANTMVNYYTSVTPVLRGQPIYIQFSNHKELKTDSSPNQARAQAALQAVNSVQSGNLALAASAAAVDAGMAMAGQSPVLRIIVENLFYPVTLDVLHQIFSKFGTVLKIITFTKNNQFQALLQYADPVSAQHAKLSLDGQNIYNACCTLRIDFSKLTSLNVKYNNDKSRDYTRPDLPSGDSQPSLDQTMAAAFGAPGIMSASPYAGAGFPPTFAIPQAAGLSVPNVHGALAPLAIPSAAAAAAAAGRIAIPGLAGAGNSVLLVSNLNPERVTPQSLFILFGVYGDVQRVKVLFNKKENALVQMADGSQAQLAMSHLNGHKLHGKPVRITLSKHQSVQLPREGQEDQGLTKDYGNSPLHRFKKPGSKNFQNIFPPSATLHLSNIPPSISEDDLKILFSSNGGIVKGFKFFQKDRKMALIQMGSVEEAIQALIDLHNHDLGENHHLRVSFSKSTI.

N-acetylmethionine is present on Met-1. At Ser-16 the chain carries Phosphoserine. 3 consecutive RRM domains span residues 59-143, 184-260, and 363-437; these read RVIH…SSPN, LRII…FSKL, and SVLL…LSKH. Lys-65 participates in a covalent cross-link: Glycyl lysine isopeptide (Lys-Gly) (interchain with G-Cter in SUMO2). Tyr-127 carries the phosphotyrosine modification. Thr-138 is modified (phosphothreonine). Ser-141 is modified (phosphoserine). Lys-218 is covalently cross-linked (Glycyl lysine isopeptide (Lys-Gly) (interchain with G-Cter in SUMO2)). The disordered stretch occupies residues 437–460; that stretch reads HQSVQLPREGQEDQGLTKDYGNSP. Ser-459 is modified (phosphoserine). An RRM 4 domain is found at 480 to 555; it reads ATLHLSNIPP…HHLRVSFSKS (76 aa).

In terms of assembly, monomer. Part of a ternary complex containing KHSRP, PTBP1, PTBP2 and HNRPH1. Interacts with RAVER1 and SFPQ.

It is found in the nucleus. Plays a role in pre-mRNA splicing and in the regulation of alternative splicing events. Activates exon skipping of its own pre-mRNA during muscle cell differentiation. Binds to the polypyrimidine tract of introns. May promote RNA looping when bound to two separate polypyrimidine tracts in the same pre-mRNA. May promote the binding of U2 snRNP to pre-mRNA. Cooperates with RAVER1 to modulate switching between mutually exclusive exons during maturation of the TPM1 pre-mRNA. Represses the splicing of MAPT/Tau exon 10. Binds to polypyrimidine-rich controlling element (PCE) of CFTR and promotes exon skipping of CFTR exon 9, thereby antagonizing TIA1 and its role in exon inclusion of CFTR exon 9. Plays a role in the splicing of pyruvate kinase PKM by binding repressively to a polypyrimidine tract flanking PKM exon 9, inhibiting exon 9 inclusion and resulting in exon 10 inclusion and production of the PKM M2 isoform. In Bos taurus (Bovine), this protein is Polypyrimidine tract-binding protein 1 (PTBP1).